Here is a 564-residue protein sequence, read N- to C-terminus: Zyxin (564 aa).

Position 2 is an N-acetylalanine (Ala2). The disordered stretch occupies residues 30 to 141 (VAPKPKVNPF…TQLPPQPREK (112 aa)). Composition is skewed to pro residues over residues 63 to 78 (IPPP…PPPL) and 93 to 109 (FPPP…PPAP). Ser117, Ser144, Ser170, and Ser171 each carry phosphoserine. Residues 162 to 344 (NDPFKARVSS…RSPGGPGPLT (183 aa)) are disordered. Pro residues-rich tracts occupy residues 174-189 (VPPP…PSTK) and 197-214 (PLPP…PQPQ). Thr180 carries the post-translational modification Phosphothreonine. The span at 234–243 (QPVSSANTQP) shows a compositional bias: polar residues. Arg244 is subject to Asymmetric dimethylarginine. A compositionally biased stretch (low complexity) spans 255 to 275 (PKFAPVAPKFTPVVSKFSPGA). Lys256 and Lys263 each carry N6-acetyllysine. The residue at position 265 (Thr265) is a Phosphothreonine. Residue Lys270 is modified to N6-acetyllysine. Residues Ser272 and Ser300 each carry the phosphoserine modification. Residues 294 to 310 (SSVSTGSPQPPSFTYAQ) are compositionally biased toward polar residues. Over residues 311 to 322 (QKEKPLVQEKQH) the composition is skewed to basic and acidic residues. Position 336 is a phosphoserine (Ser336). LIM zinc-binding domains follow at residues 376 to 435 (CGKC…TLEK), 436 to 495 (CNTC…YAPR), and 496 to 562 (CSVC…SARA).

This sequence belongs to the zyxin/ajuba family. Interacts, via the Pro-rich regions, with the EVH1 domains of ENAH, EVL and VASP. Interacts with the first LIM domain of TES. Interacts with SYNPO2.

It is found in the cytoplasm. The protein resides in the cytoskeleton. Its subcellular location is the cell junction. It localises to the focal adhesion. The protein localises to the nucleus. Adhesion plaque protein. Binds alpha-actinin and the CRP protein. Important for targeting TES and ENA/VASP family members to focal adhesions and for the formation of actin-rich structures. May be a component of a signal transduction pathway that mediates adhesion-stimulated changes in gene expression. This Mus musculus (Mouse) protein is Zyxin (Zyx).